The following is a 241-amino-acid chain: Homeobox protein TGIF2LX (241 aa).

Disordered stretches follow at residues 1–58 (MEAA…GNLP) and 126–209 (TGKD…VSPE). Residues 21-39 (AKTQSPAQDTSIMSRNNAD) are compositionally biased toward polar residues. Residues 48 to 111 (EHKKKRKGNL…INARRRILPD (64 aa)) constitute a DNA-binding region (homeobox; TALE-type).

The protein belongs to the TALE/TGIF homeobox family.

The protein resides in the nucleus. Its function is as follows. May have a transcription role in testis. This is Homeobox protein TGIF2LX (TGIF2LX) from Gorilla gorilla gorilla (Western lowland gorilla).